A 248-amino-acid chain; its full sequence is Thiol:disulfide interchange protein DsbG (248 aa).

An N-terminal signal peptide occupies residues 1–17 (MLKKILLLALLPAIAFA). C126 and C129 are joined by a disulfide.

Belongs to the thioredoxin family. DsbC subfamily. In terms of assembly, homodimer. Interacts with ErfK, YbiS and YnhG.

It localises to the periplasm. Its function is as follows. Involved in disulfide bond formation. DsbG and DsbC are part of a periplasmic reducing system that controls the level of cysteine sulfenylation, and provides reducing equivalents to rescue oxidatively damaged secreted proteins such as ErfK, YbiS and YnhG. Probably also functions as a disulfide isomerase with a narrower substrate specificity than DsbC. DsbG is maintained in a reduced state by DsbD. Displays chaperone activity in both redox states in vitro. This is Thiol:disulfide interchange protein DsbG (dsbG) from Escherichia coli (strain K12).